Here is a 298-residue protein sequence, read N- to C-terminus: Heterogeneous nuclear ribonucleoprotein C (298 aa).

Residue Ala-2 is modified to N-acetylalanine. Residues Lys-8, Lys-50, Lys-89, and Lys-94 each participate in a glycyl lysine isopeptide (Lys-Gly) (interchain with G-Cter in SUMO2) cross-link. Residues 16 to 87 (SRVFIGNLNT…QVLDINLAAE (72 aa)) form the RRM domain. Position 108 is a phosphoserine (Ser-108). Disordered regions lie at residues 131–177 (PPPP…VKGD) and 204–298 (EKEQ…EDDS). The short motif at 142–148 (PSKRQRV) is the Nuclear localization signal element. 2 positions are modified to phosphoserine: Ser-149 and Ser-153. Low complexity predominate over residues 162–173 (SKSGQRGSSSKS). Lys-163 is modified (N6-acetyllysine; alternate). Residue Lys-163 forms a Glycyl lysine isopeptide (Lys-Gly) (interchain with G-Cter in SUMO2); alternate linkage. The stretch at 176–211 (GDDLQAIKKELTQIKQKVDSLLESLEKIEKEQSKQA) forms a coiled coil. Lys-209 participates in a covalent cross-link: Glycyl lysine isopeptide (Lys-Gly) (interchain with G-Cter in SUMO2). A phosphoserine mark is found at Ser-214, Ser-216, and Ser-217. Residue Lys-222 forms a Glycyl lysine isopeptide (Lys-Gly) (interchain with G-Cter in SUMO2) linkage. Residue Lys-225 forms a Glycyl lysine isopeptide (Lys-Gly) (interchain with G-Cter in SUMO2); alternate linkage. Lys-225 participates in a covalent cross-link: Glycyl lysine isopeptide (Lys-Gly) (interchain with G-Cter in SUMO1); alternate. Residues Ser-226, Ser-231, Ser-232, and Ser-234 each carry the phosphoserine modification. Positions 235 to 246 (VKKDETNVKMES) are enriched in basic and acidic residues. Glycyl lysine isopeptide (Lys-Gly) (interchain with G-Cter in SUMO2) cross-links involve residues Lys-236 and Lys-237. Lys-243 participates in a covalent cross-link: Glycyl lysine isopeptide (Lys-Gly) (interchain with G-Cter in SUMO2); alternate. Lys-243 is covalently cross-linked (Glycyl lysine isopeptide (Lys-Gly) (interchain with G-Cter in SUMO); alternate). Ser-246 and Ser-253 each carry phosphoserine. Acidic residues predominate over residues 248–269 (AGADDSAEEGDLLDDDDNEDRG). Residues 270-279 (DDQLELKDDE) are compositionally biased toward basic and acidic residues. The segment covering 280 to 298 (KEPEEGEDDRDSANGEDDS) has biased composition (acidic residues). Phosphoserine is present on residues Ser-291 and Ser-298.

Belongs to the RRM HNRPC family. RALY subfamily. Tetramer composed of 3 copies of isoform C1 and 1 copy of isoform C2. Assembly of 3 tetramers with bound pre-mRNA gives rise to a 19S complex that interacts with HNRNPA2B1 tetramers. Component of the 40S hnRNP particle. Identified in the spliceosome C complex. Interacts with IGF2BP1. Interacts with PPIA/CYPA. Phosphorylated on Ser-253 and Ser-291 in resting cells. In terms of processing, sumoylated. Sumoylation reduces affinity for mRNA. Post-translationally, ubiquitinated and degraded after nucleo-cytoplasmic transport by YWHAE.

The protein localises to the nucleus. In terms of biological role, binds pre-mRNA and nucleates the assembly of 40S hnRNP particles. Interacts with poly-U tracts in the 3'-UTR or 5'-UTR of mRNA and modulates the stability and the level of translation of bound mRNA molecules. Single HNRNPC tetramers bind 230-240 nucleotides. Trimers of HNRNPC tetramers bind 700 nucleotides. May play a role in the early steps of spliceosome assembly and pre-mRNA splicing. N6-methyladenosine (m6A) has been shown to alter the local structure in mRNAs and long non-coding RNAs (lncRNAs) via a mechanism named 'm(6)A-switch', facilitating binding of HNRNPC, leading to regulation of mRNA splicing. The sequence is that of Heterogeneous nuclear ribonucleoprotein C from Rattus norvegicus (Rat).